Consider the following 124-residue polypeptide: Acidic phospholipase A2 BA1 (124 aa).

Disulfide bonds link Cys26-Cys116, Cys28-Cys44, Cys43-Cys95, Cys49-Cys124, Cys50-Cys88, Cys57-Cys81, and Cys75-Cys86. Tyr27, Gly29, and Gly31 together coordinate Ca(2+). His47 is an active-site residue. Asp48 provides a ligand contact to Ca(2+). Residue Asp89 is part of the active site.

Belongs to the phospholipase A2 family. Group II subfamily. D49 sub-subfamily. It depends on Ca(2+) as a cofactor. In terms of tissue distribution, expressed by the venom gland.

The protein localises to the secreted. The catalysed reaction is a 1,2-diacyl-sn-glycero-3-phosphocholine + H2O = a 1-acyl-sn-glycero-3-phosphocholine + a fatty acid + H(+). In terms of biological role, PLA2 catalyzes the calcium-dependent hydrolysis of the 2-acyl groups in 3-sn-phosphoglycerides. The protein is Acidic phospholipase A2 BA1 of Gloydius halys (Chinese water mocassin).